The chain runs to 618 residues: Arginine--tRNA ligase (618 aa).

The 'HIGH' region signature appears at 113–123 (ANPIHPLHIGH).

Belongs to the class-I aminoacyl-tRNA synthetase family.

It is found in the cytoplasm. It catalyses the reaction tRNA(Arg) + L-arginine + ATP = L-arginyl-tRNA(Arg) + AMP + diphosphate. The protein is Arginine--tRNA ligase of Sulfolobus acidocaldarius (strain ATCC 33909 / DSM 639 / JCM 8929 / NBRC 15157 / NCIMB 11770).